The sequence spans 317 residues: 4-hydroxy-3-methylbut-2-enyl diphosphate reductase (317 aa).

C12 contacts [4Fe-4S] cluster. Residues H41 and H74 each coordinate (2E)-4-hydroxy-3-methylbut-2-enyl diphosphate. Residues H41 and H74 each coordinate dimethylallyl diphosphate. Residues H41 and H74 each contribute to the isopentenyl diphosphate site. [4Fe-4S] cluster is bound at residue C97. H125 provides a ligand contact to (2E)-4-hydroxy-3-methylbut-2-enyl diphosphate. H125 provides a ligand contact to dimethylallyl diphosphate. Isopentenyl diphosphate is bound at residue H125. E127 functions as the Proton donor in the catalytic mechanism. T168 contacts (2E)-4-hydroxy-3-methylbut-2-enyl diphosphate. C198 is a binding site for [4Fe-4S] cluster. Positions 226, 227, 228, and 270 each coordinate (2E)-4-hydroxy-3-methylbut-2-enyl diphosphate. Positions 226, 227, 228, and 270 each coordinate dimethylallyl diphosphate. Residues S226, S227, N228, and S270 each coordinate isopentenyl diphosphate.

This sequence belongs to the IspH family. In terms of assembly, homodimer. It depends on [4Fe-4S] cluster as a cofactor.

The enzyme catalyses isopentenyl diphosphate + 2 oxidized [2Fe-2S]-[ferredoxin] + H2O = (2E)-4-hydroxy-3-methylbut-2-enyl diphosphate + 2 reduced [2Fe-2S]-[ferredoxin] + 2 H(+). The catalysed reaction is dimethylallyl diphosphate + 2 oxidized [2Fe-2S]-[ferredoxin] + H2O = (2E)-4-hydroxy-3-methylbut-2-enyl diphosphate + 2 reduced [2Fe-2S]-[ferredoxin] + 2 H(+). The protein operates within isoprenoid biosynthesis; dimethylallyl diphosphate biosynthesis; dimethylallyl diphosphate from (2E)-4-hydroxy-3-methylbutenyl diphosphate: step 1/1. It functions in the pathway isoprenoid biosynthesis; isopentenyl diphosphate biosynthesis via DXP pathway; isopentenyl diphosphate from 1-deoxy-D-xylulose 5-phosphate: step 6/6. Catalyzes the conversion of 1-hydroxy-2-methyl-2-(E)-butenyl 4-diphosphate (HMBPP) into a mixture of isopentenyl diphosphate (IPP) and dimethylallyl diphosphate (DMAPP). Acts in the terminal step of the DOXP/MEP pathway for isoprenoid precursor biosynthesis. The protein is 4-hydroxy-3-methylbut-2-enyl diphosphate reductase of Proteus mirabilis (strain HI4320).